A 304-amino-acid polypeptide reads, in one-letter code: N-acetylmuramic acid 6-phosphate etherase (304 aa).

The region spanning 60–221 (GVSVLRHGGR…STAVMVRLGY (162 aa)) is the SIS domain. Residue E88 is the Proton donor of the active site. Residue E119 is part of the active site.

This sequence belongs to the GCKR-like family. MurNAc-6-P etherase subfamily. As to quaternary structure, homodimer.

It carries out the reaction N-acetyl-D-muramate 6-phosphate + H2O = N-acetyl-D-glucosamine 6-phosphate + (R)-lactate. The protein operates within amino-sugar metabolism; N-acetylmuramate degradation. Specifically catalyzes the cleavage of the D-lactyl ether substituent of MurNAc 6-phosphate, producing GlcNAc 6-phosphate and D-lactate. In Thermobifida fusca (strain YX), this protein is N-acetylmuramic acid 6-phosphate etherase.